A 182-amino-acid polypeptide reads, in one-letter code: UPF0397 protein YdcD (182 aa).

5 helical membrane-spanning segments follow: residues 8–28 (IVVA…LINI), 42–62 (AVLA…IGFI), 74–94 (APWW…AFGV), 114–134 (IVQF…GDVL), and 146–166 (QGIV…TLLL).

The protein belongs to the UPF0397 family.

It is found in the cell membrane. This chain is UPF0397 protein YdcD (ydcD), found in Lactococcus lactis subsp. lactis (strain IL1403) (Streptococcus lactis).